Reading from the N-terminus, the 447-residue chain is N-succinylarginine dihydrolase (447 aa).

Substrate-binding positions include 19 to 28, Asn110, and 137 to 138; these read AGLSFGNEAS and HR. The active site involves Glu174. Arg212 is a binding site for substrate. His248 is a catalytic residue. Positions 250 and 359 each coordinate substrate. Catalysis depends on Cys365, which acts as the Nucleophile.

This sequence belongs to the succinylarginine dihydrolase family. As to quaternary structure, homodimer.

It carries out the reaction N(2)-succinyl-L-arginine + 2 H2O + 2 H(+) = N(2)-succinyl-L-ornithine + 2 NH4(+) + CO2. Its pathway is amino-acid degradation; L-arginine degradation via AST pathway; L-glutamate and succinate from L-arginine: step 2/5. In terms of biological role, catalyzes the hydrolysis of N(2)-succinylarginine into N(2)-succinylornithine, ammonia and CO(2). The polypeptide is N-succinylarginine dihydrolase (Escherichia coli O6:K15:H31 (strain 536 / UPEC)).